Here is a 318-residue protein sequence, read N- to C-terminus: Beta-sarcoglycan (318 aa).

The segment at 1–32 (MAAAAAAAAEQQSSNGPVKKSMREKAVERRSV) is disordered. Over 1–65 (MAAAAAAAAE…GLRGRKGNLA (65 aa)) the chain is Cytoplasmic. Residues 21-32 (SMREKAVERRSV) show a composition bias toward basic and acidic residues. Residues 66 to 86 (ICVIILLFILAVINLIITLVI) traverse the membrane as a helical; Signal-anchor for type II membrane protein segment. Topologically, residues 87-318 (WAVIRIGPNG…ISDNPCGNTH (232 aa)) are extracellular. N-linked (GlcNAc...) asparagine glycans are attached at residues Asn158, Asn211, and Asn258. 2 disulfides stabilise this stretch: Cys288-Cys314 and Cys290-Cys307.

This sequence belongs to the sarcoglycan beta/delta/gamma/zeta family. Cross-link to form 2 major subcomplexes: one consisting of SGCB, SGCD and SGCG and the other consisting of SGCB and SGCD. The association between SGCB and SGCG is particularly strong while SGCA is loosely associated with the other sarcoglycans. In terms of processing, disulfide bonds are present. Highest expression in heart and skeletal muscle. Low expression in brain, kidney, placenta, pancreas and lung. High expression in fetal brain. Also found in fetal lung, kidney and liver.

It is found in the cell membrane. It localises to the sarcolemma. The protein localises to the cytoplasm. The protein resides in the cytoskeleton. Its function is as follows. Component of the sarcoglycan complex, a subcomplex of the dystrophin-glycoprotein complex which forms a link between the F-actin cytoskeleton and the extracellular matrix. The polypeptide is Beta-sarcoglycan (SGCB) (Homo sapiens (Human)).